A 355-amino-acid polypeptide reads, in one-letter code: UDP-N-acetylglucosamine--N-acetylmuramyl-(pentapeptide) pyrophosphoryl-undecaprenol N-acetylglucosamine transferase (355 aa).

UDP-N-acetyl-alpha-D-glucosamine is bound by residues 13–15 (TGG), Asn125, Arg162, Ser190, Ile244, and Gln289.

The protein belongs to the glycosyltransferase 28 family. MurG subfamily.

The protein resides in the cell inner membrane. The catalysed reaction is di-trans,octa-cis-undecaprenyl diphospho-N-acetyl-alpha-D-muramoyl-L-alanyl-D-glutamyl-meso-2,6-diaminopimeloyl-D-alanyl-D-alanine + UDP-N-acetyl-alpha-D-glucosamine = di-trans,octa-cis-undecaprenyl diphospho-[N-acetyl-alpha-D-glucosaminyl-(1-&gt;4)]-N-acetyl-alpha-D-muramoyl-L-alanyl-D-glutamyl-meso-2,6-diaminopimeloyl-D-alanyl-D-alanine + UDP + H(+). It functions in the pathway cell wall biogenesis; peptidoglycan biosynthesis. Functionally, cell wall formation. Catalyzes the transfer of a GlcNAc subunit on undecaprenyl-pyrophosphoryl-MurNAc-pentapeptide (lipid intermediate I) to form undecaprenyl-pyrophosphoryl-MurNAc-(pentapeptide)GlcNAc (lipid intermediate II). This chain is UDP-N-acetylglucosamine--N-acetylmuramyl-(pentapeptide) pyrophosphoryl-undecaprenol N-acetylglucosamine transferase, found in Neisseria meningitidis serogroup C (strain 053442).